Here is a 1360-residue protein sequence, read N- to C-terminus: TRAF2 and NCK-interacting protein kinase (1360 aa).

The region spanning 25-289 (FELVELVGNG…TEQLMKHPFI (265 aa)) is the Protein kinase domain. ATP is bound by residues 31 to 39 (VGNGTYGQV) and K54. D153 acts as the Proton acceptor in catalysis. The residue at position 187 (T187) is a Phosphothreonine. 3 disordered regions span residues 284-347 (MKHP…LPGE), 398-440 (QKEQ…RRRA), and 539-589 (ERSR…RPVD). Residues 288-307 (FIRDQPNERQVRIQLKDHID) show a composition bias toward basic and acidic residues. Positions 290–1047 (RDQPNERQVR…EIRKYKKRFN (758 aa)) are mediates interaction with NEDD4. A compositionally biased stretch (acidic residues) spans 317–335 (DETEYEYSGSEEEEEENDS). S324 and S326 each carry phosphoserine. Residues S560 and S570 each carry the phosphoserine modification. T581 is modified (phosphothreonine). Phosphoserine occurs at positions 600, 608, 610, and 640. Disordered regions lie at residues 601–801 (QGPA…KAID), 814–878 (LRIE…YNVG), 908–927 (TSGE…AGHI), and 933–998 (VQQS…ESSA). The segment covering 652–669 (RIEKFDRSSWLRQEEDIP) has biased composition (basic and acidic residues). 9 positions are modified to phosphoserine: S678, S680, S688, S701, S707, S720, S764, S766, and S769. Low complexity predominate over residues 720–755 (SPLQRTSSGSSSSSSTPSSQPSSQGGSQPGSQAGSS). Composition is skewed to basic and acidic residues over residues 775–789 (EPAK…DITR) and 814–827 (LRIE…KKVT). Positions 834-847 (EESESSEEEEEDGE) are enriched in acidic residues. Over residues 908 to 917 (TSGEKKRSGH) the composition is skewed to basic and acidic residues. S959 bears the Phosphoserine mark. A compositionally biased stretch (acidic residues) spans 987-996 (TDEDEEDEES). The region spanning 1047–1334 (NSEILCAALW…KFLCERNDKV (288 aa)) is the CNH domain.

Belongs to the protein kinase superfamily. STE Ser/Thr protein kinase family. STE20 subfamily. Interacts (via the CNH domain) with RAP2A (GTP-bound form preferentially); the interaction is direct and required for the activation of TNIK by RAP2A. Interacts with NEDD4; recruits RAP2A to NEDD4. Interacts with TRAF2 and NCK. Interacts with TCF7L2/TCF4 and CTNNB1; the interaction is direct. Interacts with TANC1. Post-translationally, autophosphorylated. Autophosphorylation is activated by RAP2A and induces association to the cytoskeletal fraction. As to expression, expressed ubiquitously. Highest levels observed in heart, brain and skeletal muscle. Expressed in normal colonic epithelia and colorectal cancer tissues.

Its subcellular location is the nucleus. The protein localises to the cytoplasm. It is found in the recycling endosome. It localises to the cytoskeleton. The catalysed reaction is L-seryl-[protein] + ATP = O-phospho-L-seryl-[protein] + ADP + H(+). The enzyme catalyses L-threonyl-[protein] + ATP = O-phospho-L-threonyl-[protein] + ADP + H(+). In terms of biological role, serine/threonine kinase that acts as an essential activator of the Wnt signaling pathway. Recruited to promoters of Wnt target genes and required to activate their expression. May act by phosphorylating TCF4/TCF7L2. Appears to act upstream of the JUN N-terminal pathway. May play a role in the response to environmental stress. Part of a signaling complex composed of NEDD4, RAP2A and TNIK which regulates neuronal dendrite extension and arborization during development. More generally, it may play a role in cytoskeletal rearrangements and regulate cell spreading. Phosphorylates SMAD1 on Thr-322. Activator of the Hippo signaling pathway which plays a pivotal role in organ size control and tumor suppression by restricting proliferation and promoting apoptosis. MAP4Ks act in parallel to and are partially redundant with STK3/MST2 and STK4/MST2 in the phosphorylation and activation of LATS1/2, and establish MAP4Ks as components of the expanded Hippo pathway. The sequence is that of TRAF2 and NCK-interacting protein kinase from Homo sapiens (Human).